Consider the following 170-residue polypeptide: Class I hydrophobin E (170 aa).

A signal peptide spans 1 to 19; sequence MQLTTLLTGLISVLSVTTA. Cystine bridges form between Cys-62-Cys-126, Cys-70-Cys-117, Cys-71-Cys-105, and Cys-127-Cys-139.

This sequence belongs to the fungal hydrophobin family.

It localises to the secreted. The protein localises to the cell wall. Its function is as follows. Aerial growth, conidiation, and dispersal of filamentous fungi in the environment rely upon a capability of their secreting small amphipathic proteins called hydrophobins (HPBs) with low sequence identity. Class I can self-assemble into an outermost layer of rodlet bundles on aerial cell surfaces, conferring cellular hydrophobicity that supports fungal growth, development and dispersal; whereas Class II form highly ordered films at water-air interfaces through intermolecular interactions but contribute nothing to the rodlet structure. In P.expansum, hydrophobins contribute to germination, tolerance to cold stress and mycotoxins patulin and citrinin production. The chain is Class I hydrophobin E from Penicillium expansum (Blue mold rot fungus).